The sequence spans 114 residues: Flagellar hook-basal body complex protein FliE (114 aa).

It belongs to the FliE family.

The protein localises to the bacterial flagellum basal body. The polypeptide is Flagellar hook-basal body complex protein FliE (Desulfitobacterium hafniense (strain DSM 10664 / DCB-2)).